We begin with the raw amino-acid sequence, 357 residues long: Protein RecA (357 aa).

78–85 (GPESSGKT) is an ATP binding site.

It belongs to the RecA family.

Its subcellular location is the cytoplasm. Functionally, can catalyze the hydrolysis of ATP in the presence of single-stranded DNA, the ATP-dependent uptake of single-stranded DNA by duplex DNA, and the ATP-dependent hybridization of homologous single-stranded DNAs. It interacts with LexA causing its activation and leading to its autocatalytic cleavage. This Cereibacter sphaeroides (strain ATCC 17029 / ATH 2.4.9) (Rhodobacter sphaeroides) protein is Protein RecA.